Consider the following 537-residue polypeptide: MFS-type transporter qa-x (537 aa).

Residues 1–26 lie on the Cytoplasmic side of the membrane; it reads MTLLALKEDRPTPKAVYNWRVYTCAA. Residues 27–47 traverse the membrane as a helical segment; it reads IASFASCMIGYDSAFIGTTLA. The Extracellular portion of the chain corresponds to 48–74; it reads LPSFTKEFDFASYTPGALALLQSNIVS. The helical transmembrane segment at 75-95 threads the bilayer; the sequence is VYQAGAFFGCLFAYATSYFLG. At 96–98 the chain is on the cytoplasmic side; sequence RRK. The helical transmembrane segment at 99 to 119 threads the bilayer; it reads SLIAFSVVFIIGAAIMLAADG. Over 120 to 131 the chain is Extracellular; it reads QGRGIDPIIAGR. Residues 132 to 152 traverse the membrane as a helical segment; sequence VLAGIGVGGASNMVPIYISEL. The Cytoplasmic portion of the chain corresponds to 153-160; it reads APPAVRGR. Residues 161–181 form a helical membrane-spanning segment; that stretch reads LVGIYELGWQIGGLVGFWINY. The Extracellular portion of the chain corresponds to 182–195; that stretch reads GVNTTMAPTRSQWL. A glycan (N-linked (GlcNAc...) asparagine) is linked at asparagine 184. The helical transmembrane segment at 196–216 threads the bilayer; it reads IPFAVQLIPAGLLFLGSFWIP. Residues 217–285 lie on the Cytoplasmic side of the membrane; sequence ESPRWLYANG…SLKQRKVQWR (69 aa). Residues 286 to 306 form a helical membrane-spanning segment; it reads FFLGGMLFFWQNGSGINAINY. At 307–327 the chain is on the extracellular side; that stretch reads YSPTVFRSIGITGTDTGFLTT. A helical membrane pass occupies residues 328–349; sequence GIFGVVKMVLTIIWLLWLVDLV. The Cytoplasmic portion of the chain corresponds to 350–352; it reads GRR. The chain crosses the membrane as a helical span at residues 353–373; sequence RILFIGAAGGSLCMWFIGAYI. Residues 374-389 are Extracellular-facing; it reads KIADPGSNKAEDAKLT. Residues 390–410 traverse the membrane as a helical segment; sequence SGGIAAIFFFYLWTAFYTPSW. Residues 411-435 are Cytoplasmic-facing; sequence NGTPWVINSEMFDQNTRSLGQASAA. A helical transmembrane segment spans residues 436 to 456; sequence ANNWFWNFIISRFTPQMFIKM. Residues 457–458 lie on the Extracellular side of the membrane; the sequence is EY. Residues 459-479 traverse the membrane as a helical segment; sequence GVYFFFASLMLLSIVFIYFFL. Residues 480–537 are Cytoplasmic-facing; the sequence is PETKSIPLEAMDRLFEIKPVQNANKNLMAELNFDRNPEREESSSLDDKDRVTQTENAV. A compositionally biased stretch (basic and acidic residues) spans 514–531; sequence RNPEREESSSLDDKDRVT. Positions 514–537 are disordered; that stretch reads RNPEREESSSLDDKDRVTQTENAV.

It belongs to the major facilitator superfamily. Sugar transporter (TC 2.A.1.1) family.

It localises to the membrane. Its function is as follows. MFS-type transporter; part of the qa gene cluster that mediates the catabolism of quinic acid (QA) and as such, allows the use of QA as a sole carbon source. Involved in the upatke of QA. The qa cluster encodes 3 inducible enymes (qa-2, qa-3 and qa-4) catalyzing the first three reactions in the catabolism of quinic acid to protocatechuic acid (also known as 3,4-Dihydroxybenzoic acid). The protein is MFS-type transporter qa-x of Neurospora crassa (strain ATCC 24698 / 74-OR23-1A / CBS 708.71 / DSM 1257 / FGSC 987).